Here is a 197-residue protein sequence, read N- to C-terminus: Large ribosomal subunit protein eL15 (197 aa).

The disordered stretch occupies residues 175–197 (LRTGRKGSSKSRPSIRANGRLRR).

Belongs to the eukaryotic ribosomal protein eL15 family.

The chain is Large ribosomal subunit protein eL15 (rpl15e) from Thermoplasma volcanium (strain ATCC 51530 / DSM 4299 / JCM 9571 / NBRC 15438 / GSS1).